The chain runs to 442 residues: 26S proteasome non-ATPase regulatory subunit 12 homolog A (442 aa).

The stretch at 6 to 137 forms a coiled coil; that stretch reads KLEATIDRLL…EAADLMQEVA (132 aa). Residues 232–403 form the PCI domain; that stretch reads EICRSYKAIY…GIVCFQIAKD (172 aa).

This sequence belongs to the proteasome subunit p55 family. Component of the 19S regulatory particle (RP/PA700) lid subcomplex of the 26S proteasome. The 26S proteasome is composed of a core protease (CP), known as the 20S proteasome, capped at one or both ends by the 19S regulatory particle (RP/PA700). The RP/PA700 complex is composed of at least 17 different subunits in two subcomplexes, the base and the lid, which form the portions proximal and distal to the 20S proteolytic core, respectively. As to expression, ubiquitous with highest expression in flowers.

It is found in the cytoplasm. It localises to the nucleus. In terms of biological role, acts as a regulatory subunit of the 26 proteasome which is involved in the ATP-dependent degradation of ubiquitinated proteins. Required for gametogenesis and sporophyte development. Acts redundantly with RPN5B. This is 26S proteasome non-ATPase regulatory subunit 12 homolog A (RPN5A) from Arabidopsis thaliana (Mouse-ear cress).